The following is a 409-amino-acid chain: L-cysteine:1D-myo-inositol 2-amino-2-deoxy-alpha-D-glucopyranoside ligase (409 aa).

C43 lines the Zn(2+) pocket. L-cysteinyl-5'-AMP-binding positions include 43–46 (CGIT), T58, and 81–83 (NVT). Residues 45–55 (ITPYDATHMGH) carry the 'HIGH' region motif. Residues 183 to 188 (ERGGDP) carry the 'ERGGDP' region motif. Residue W224 participates in L-cysteinyl-5'-AMP binding. Zn(2+) is bound at residue C228. 246-248 (GSD) contacts L-cysteinyl-5'-AMP. H253 contributes to the Zn(2+) binding site. L-cysteinyl-5'-AMP is bound at residue V280. The short motif at 286 to 290 (KMSKS) is the 'KMSKS' region element.

Belongs to the class-I aminoacyl-tRNA synthetase family. MshC subfamily. In terms of assembly, monomer. Zn(2+) serves as cofactor.

It carries out the reaction 1D-myo-inositol 2-amino-2-deoxy-alpha-D-glucopyranoside + L-cysteine + ATP = 1D-myo-inositol 2-(L-cysteinylamino)-2-deoxy-alpha-D-glucopyranoside + AMP + diphosphate + H(+). In terms of biological role, catalyzes the ATP-dependent condensation of GlcN-Ins and L-cysteine to form L-Cys-GlcN-Ins. This Streptomyces scabiei (strain 87.22) protein is L-cysteine:1D-myo-inositol 2-amino-2-deoxy-alpha-D-glucopyranoside ligase.